The following is a 155-amino-acid chain: 3-hydroxyacyl-[acyl-carrier-protein] dehydratase FabZ (155 aa).

H54 is an active-site residue.

Belongs to the thioester dehydratase family. FabZ subfamily.

It is found in the cytoplasm. It catalyses the reaction a (3R)-hydroxyacyl-[ACP] = a (2E)-enoyl-[ACP] + H2O. Functionally, involved in unsaturated fatty acids biosynthesis. Catalyzes the dehydration of short chain beta-hydroxyacyl-ACPs and long chain saturated and unsaturated beta-hydroxyacyl-ACPs. The protein is 3-hydroxyacyl-[acyl-carrier-protein] dehydratase FabZ of Burkholderia lata (strain ATCC 17760 / DSM 23089 / LMG 22485 / NCIMB 9086 / R18194 / 383).